A 62-amino-acid chain; its full sequence is Large ribosomal subunit protein bL28 (62 aa).

Belongs to the bacterial ribosomal protein bL28 family.

This is Large ribosomal subunit protein bL28 from Moorella thermoacetica (strain ATCC 39073 / JCM 9320).